We begin with the raw amino-acid sequence, 227 residues long: DNA repair protein RecO (227 aa).

This sequence belongs to the RecO family.

In terms of biological role, involved in DNA repair and RecF pathway recombination. The polypeptide is DNA repair protein RecO (Pseudomonas putida (strain ATCC 47054 / DSM 6125 / CFBP 8728 / NCIMB 11950 / KT2440)).